Reading from the N-terminus, the 665-residue chain is Cyclic nucleotide-gated cation channel subunit A (665 aa).

The Cytoplasmic segment spans residues Met-1 to Trp-110. A helical membrane pass occupies residues Leu-111–Phe-131. Topologically, residues Trp-132 to Ala-138 are extracellular. Asn-135 carries an N-linked (GlcNAc...) asparagine glycan. A helical transmembrane segment spans residues Pro-139–Val-159. Residues His-160 to Lys-186 lie on the Cytoplasmic side of the membrane. A helical membrane pass occupies residues Gly-187–Pro-207. Over Glu-208 to Lys-253 the chain is Extracellular. A helical membrane pass occupies residues Val-254–Tyr-274. Over Glu-275–Tyr-325 the chain is Cytoplasmic. The chain crosses the membrane as a helical span at residues Leu-326–Ile-346. The Extracellular portion of the chain corresponds to Gly-347–Gly-481. Residues Leu-437–Leu-559, Glu-496, and Arg-511 each bind 3',5'-cyclic GMP. Residues Ile-482–Ile-502 traverse the membrane as a helical segment. The Cytoplasmic portion of the chain corresponds to Ala-503–Leu-665. The segment at Arg-633 to Leu-665 is disordered. Polar residues predominate over residues Ala-654 to Leu-665.

The protein belongs to the cyclic nucleotide-gated cation channel (TC 1.A.1.5) family. Expressed in antennae and the visual system.

The protein resides in the membrane. Its function is as follows. Approximately 50-fold more sensitive to cGMP than to cAMP. May be involved in transduction cascades of both invertebrate photoreceptors and olfactory sensillae. This is Cyclic nucleotide-gated cation channel subunit A (CngA) from Drosophila melanogaster (Fruit fly).